A 274-amino-acid chain; its full sequence is Large ribosomal subunit protein uL2 (274 aa).

The interval 223 to 274 (VAMNPVDHPHGGGEGRTSGGRHPVTPWGVPTKGYKTRSNKRTDKYIVRRRTK) is disordered.

Belongs to the universal ribosomal protein uL2 family. In terms of assembly, part of the 50S ribosomal subunit. Forms a bridge to the 30S subunit in the 70S ribosome.

Functionally, one of the primary rRNA binding proteins. Required for association of the 30S and 50S subunits to form the 70S ribosome, for tRNA binding and peptide bond formation. It has been suggested to have peptidyltransferase activity; this is somewhat controversial. Makes several contacts with the 16S rRNA in the 70S ribosome. In Shewanella amazonensis (strain ATCC BAA-1098 / SB2B), this protein is Large ribosomal subunit protein uL2.